We begin with the raw amino-acid sequence, 1476 residues long: SH3 and multiple ankyrin repeat domains protein 2 (1476 aa).

Over residues L66 to S76 the composition is skewed to polar residues. The disordered stretch occupies residues L66 to F134. The SH3 domain maps to V147–C206. At V162 the chain carries Phosphoserine. A PDZ domain is found at T247 to T341. S372 bears the Phosphoserine mark. Residues R391–N412 form a disordered region. The residue at position 456 (S456) is a Phosphoserine. T485 carries the post-translational modification Phosphothreonine. The segment at L503–C533 is disordered. The span at I512–P528 shows a compositional bias: pro residues. Residue S586 is modified to Phosphoserine. Disordered stretches follow at residues T659–R916, V946–A983, and P1057–D1153. The segment covering S666 to S678 has biased composition (low complexity). The segment covering V711–R722 has biased composition (basic and acidic residues). A Phosphoserine modification is found at S724. Positions L783–G795 are enriched in gly residues. Low complexity predominate over residues R833–S846. Basic and acidic residues-rich tracts occupy residues A847 to L868 and R899 to R916. A Phosphothreonine modification is found at T903. Residues T1070–T1085 are compositionally biased toward polar residues. The segment covering V1119 to E1130 has biased composition (basic and acidic residues). Over residues T1131–S1151 the composition is skewed to low complexity. The SH3-binding motif lies at P1169–P1175. Disordered regions lie at residues E1195–A1216 and N1260–K1403. The span at I1202 to G1212 shows a compositional bias: pro residues. Positions S1291 to V1305 are enriched in low complexity. T1292 is a glycosylation site (O-linked (GlcNAc) threonine). Polar residues predominate over residues P1307–S1317. Phosphoserine occurs at positions 1334 and 1338. Residues L1364–P1375 show a composition bias toward polar residues. The segment covering R1387–S1401 has biased composition (low complexity). The SAM domain maps to W1413–R1476.

The protein belongs to the SHANK family. In terms of assembly, is part of a complex with DLG4/PSD-95 and DLGAP1/GKAP. Interacts with CTTN/cortactin SH3 domain, DLGAP1/GKAP and alpha-latrotoxin receptor 1. Interacts with DNM2, DBNL, GRID2, BAIAP2, SLC9A3, PLCB3 and CFTR. Interacts (via proline-rich region) with PDE4D. Interacts with ABI1 (via SH3 domain). As to expression, detected in brain (at protein level), where it is highly expressed in Purkinje cells.

The protein resides in the apical cell membrane. It localises to the cytoplasm. Its subcellular location is the synapse. It is found in the postsynaptic density. The protein localises to the cell projection. The protein resides in the dendritic spine. It localises to the growth cone. In terms of biological role, seems to be an adapter protein in the postsynaptic density (PSD) of excitatory synapses that interconnects receptors of the postsynaptic membrane including NMDA-type and metabotropic glutamate receptors, and the actin-based cytoskeleton. May play a role in the structural and functional organization of the dendritic spine and synaptic junction. The chain is SH3 and multiple ankyrin repeat domains protein 2 (Shank2) from Mus musculus (Mouse).